The sequence spans 154 residues: NADPH-dependent 7-cyano-7-deazaguanine reductase (154 aa).

Catalysis depends on Cys-52, which acts as the Thioimide intermediate. Asp-59 serves as the catalytic Proton donor. Substrate contacts are provided by residues 74–76 and 93–94; these read VES and HE.

The protein belongs to the GTP cyclohydrolase I family. QueF type 1 subfamily.

Its subcellular location is the cytoplasm. The enzyme catalyses 7-aminomethyl-7-carbaguanine + 2 NADP(+) = 7-cyano-7-deazaguanine + 2 NADPH + 3 H(+). It participates in tRNA modification; tRNA-queuosine biosynthesis. Catalyzes the NADPH-dependent reduction of 7-cyano-7-deazaguanine (preQ0) to 7-aminomethyl-7-deazaguanine (preQ1). In Sinorhizobium medicae (strain WSM419) (Ensifer medicae), this protein is NADPH-dependent 7-cyano-7-deazaguanine reductase.